The primary structure comprises 426 residues: Histidine--tRNA ligase (426 aa).

This sequence belongs to the class-II aminoacyl-tRNA synthetase family. As to quaternary structure, homodimer.

Its subcellular location is the cytoplasm. It catalyses the reaction tRNA(His) + L-histidine + ATP = L-histidyl-tRNA(His) + AMP + diphosphate + H(+). This is Histidine--tRNA ligase from Streptococcus thermophilus (strain ATCC BAA-491 / LMD-9).